The sequence spans 190 residues: MPQHTELVVLLDDDGETIGTAPKATVHTRDTALHLAFSCHVFDAEGRILVTRRAIGKLTWPGVWTNSFCGHPAPDEDMLEAVHRRAEQELGLTLESVELVLPDFRYRATDAAGVVENEICPVFRAVAATPVDPRPEEVGEYQWVDPEQLIPAVAHTPWAFSPWLTLQLPLLYPEHAAHAGLADAAAVPAA.

Positions 27 and 34 each coordinate Mn(2+). The region spanning 32-166 (ALHLAFSCHV…PWAFSPWLTL (135 aa)) is the Nudix hydrolase domain. Residue cysteine 69 is part of the active site. Histidine 71 provides a ligand contact to Mn(2+). Glutamate 89 serves as a coordination point for Mg(2+). Glutamate 116 and glutamate 118 together coordinate Mn(2+). Residue glutamate 118 is part of the active site.

This sequence belongs to the IPP isomerase type 1 family. The cofactor is Mg(2+). Mn(2+) is required as a cofactor.

Its subcellular location is the cytoplasm. It carries out the reaction isopentenyl diphosphate = dimethylallyl diphosphate. It participates in isoprenoid biosynthesis; dimethylallyl diphosphate biosynthesis; dimethylallyl diphosphate from isopentenyl diphosphate: step 1/1. Functionally, catalyzes the 1,3-allylic rearrangement of the homoallylic substrate isopentenyl (IPP) to its highly electrophilic allylic isomer, dimethylallyl diphosphate (DMAPP). The chain is Isopentenyl-diphosphate Delta-isomerase from Clavibacter sepedonicus (Clavibacter michiganensis subsp. sepedonicus).